A 175-amino-acid chain; its full sequence is Putative transmembrane protein ORF175 (175 aa).

The next 4 helical transmembrane spans lie at 14-34, 58-78, 101-121, and 142-162; these read LGIV…GSFM, VLSN…AIAF, IVVA…FALF, and ITPF…VLSI.

It is found in the host membrane. The protein is Putative transmembrane protein ORF175 of Acidianus two-tailed virus (ATV).